Reading from the N-terminus, the 89-residue chain is UPF0298 protein GK1096 (89 aa).

Belongs to the UPF0298 family.

The protein resides in the cytoplasm. This Geobacillus kaustophilus (strain HTA426) protein is UPF0298 protein GK1096.